We begin with the raw amino-acid sequence, 426 residues long: MVPGVRIIPSLLGLVMFWLPLDSQARSRSGKVCLFGEKIYTPGQSWHPYLEPQGTIYCVRCTCSENGHVNCYRLRCPPLHCSQPVMEPQQCCPRCVDPHVPSGLRVPLKSCQLNETTYQHGEIFSAQELFPARLSNQCVLCSCIEGHTYCGLMTCPEPSCPTTLPLPDSCCQTCKDRTTESSTEENLTQLQHGERHSQDPCSERRGPSTPAPTSLSSPLGFIPRHFQSVGMGSTTIKIILKEKHKKACTHNGKTYSHGEVWHPTVLSFGPMPCILCTCIDGYQDCHRVTCPTQYPCSQPKKVAGKCCKICPEDEAEDDHSEVISTRCPKVPGQFHVYTLASPSPDSLHRFVLEHEASDQVEMYIWKLVKGIYHLVQIKRVRKQDFQKEAQNFRLLTGTHEGYWTVFLAQTPELKVTASPDKVTKTL.

Positions 1–25 (MVPGVRIIPSLLGLVMFWLPLDSQA) are cleaved as a signal peptide. 2 consecutive VWFC domains span residues 31-96 (KVCL…PRCV) and 109-175 (KSCQ…QTCK). A glycan (N-linked (GlcNAc...) asparagine) is linked at Asn114. Ser182 is subject to Phosphoserine. Residues 182-191 (STEENLTQLQ) are compositionally biased toward polar residues. A disordered region spans residues 182-216 (STEENLTQLQHGERHSQDPCSERRGPSTPAPTSLS). Residue Asn186 is glycosylated (N-linked (GlcNAc...) asparagine). A compositionally biased stretch (basic and acidic residues) spans 192–206 (HGERHSQDPCSERRG). A compositionally biased stretch (low complexity) spans 207-216 (PSTPAPTSLS). One can recognise a VWFC 3 domain in the interval 246-311 (KACTHNGKTY…VAGKCCKICP (66 aa)).

In terms of assembly, interacts with GDF5. May interact with INHBA, BMP2, BMP4, BMP5, BMP6, and BMP7. As to expression, weakly expressed in the liver and kidney. In reproductive organs expressed in connective tissues such as ligaments of the ovary and oviduct in females, and of testis, epididymis and certain male accessory sex glands in males. Expression was high in uterine myometrium. Weakly expressed in cartilage of the femoral head, patella, articular facets of vertebrae, in the annulus fibrosus of intervertebral disks. In normal cartilage, expression was confined to articular chondrocytes especially in the superficial zone.

The protein resides in the secreted. Its function is as follows. Implicated in tumor angiogenesis. May inhibits BMPs activity by blocking their interaction with their receptors. Has a negative regulator effect on the cartilage formation/regeneration from immature mesenchymal cells, by preventing or reducing the rate of matrix accumulation. May play a role during myoblast and osteoblast differentiation, and maturation. The polypeptide is Chordin-like protein 2 (Chrdl2) (Mus musculus (Mouse)).